The sequence spans 154 residues: Transcriptional repressor NrdR (154 aa).

A zinc finger spans residues 3-34 (CPFCGANDTKVIDSRLVAEGEQVRRRRECVAC). The 91-residue stretch at 49 to 139 (PRLIKQDGTR…VYRRFQDLDE (91 aa)) folds into the ATP-cone domain.

The protein belongs to the NrdR family. Zn(2+) serves as cofactor.

Its function is as follows. Negatively regulates transcription of bacterial ribonucleotide reductase nrd genes and operons by binding to NrdR-boxes. This is Transcriptional repressor NrdR from Pseudomonas putida (strain ATCC 700007 / DSM 6899 / JCM 31910 / BCRC 17059 / LMG 24140 / F1).